A 315-amino-acid polypeptide reads, in one-letter code: Putative peptide transport system permease protein BMEII0209 (315 aa).

A run of 6 helical transmembrane segments spans residues 13 to 33 (AIPV…LLPG), 102 to 122 (LALL…VVAA), 136 to 156 (LALL…VILF), 178 to 198 (WLRS…GYLA), 238 to 258 (VSVL…SVVI), and 287 to 307 (MLFL…LYTI). In terms of domain architecture, ABC transmembrane type-1 spans 96-305 (LPVTISLALL…AINVLVDILY (210 aa)).

This sequence belongs to the binding-protein-dependent transport system permease family. As to quaternary structure, the complex is composed of two ATP-binding proteins (BMEII0205 and BMEII0206), two transmembrane proteins (BMEII0207/BMEII0208 and BMEII0209) and a solute-binding protein (BMEII0210).

The protein resides in the cell inner membrane. Functionally, probably part of an ABC transporter complex that could be involved in peptide import. Probably responsible for the translocation of the substrate across the membrane. This is Putative peptide transport system permease protein BMEII0209 from Brucella melitensis biotype 1 (strain ATCC 23456 / CCUG 17765 / NCTC 10094 / 16M).